A 1150-amino-acid chain; its full sequence is Pyruvate carboxylase (1150 aa).

The 453-residue stretch at 3 to 455 (QIKKLLVANR…TTKFIEETPE (453 aa)) folds into the Biotin carboxylation domain. ATP-binding residues include Lys119, Lys161, His211, and Glu278. An ATP-grasp domain is found at 123–319 (RTTAIKADLP…IVKTQILVAA (197 aa)). Residue Arg294 is part of the active site. The Pyruvate carboxyltransferase domain maps to 533–802 (VLLTDTTFRD…HLRTDIEGME (270 aa)). 541–545 (RDAHQ) is a binding site for substrate. The Mn(2+) site is built by Asp542, Lys712, His741, and His743. Lys712 is modified (N6-carboxylysine). The Biotinyl-binding domain occupies 1071-1146 (KADKSNPSHI…ATGDLLIEIE (76 aa)). Residue Lys1112 is modified to N6-biotinyllysine.

Homotetramer. Biotin is required as a cofactor.

It catalyses the reaction hydrogencarbonate + pyruvate + ATP = oxaloacetate + ADP + phosphate + H(+). Catalyzes a 2-step reaction, involving the ATP-dependent carboxylation of the covalently attached biotin in the first step and the transfer of the carboxyl group to pyruvate in the second. In Staphylococcus aureus (strain Mu50 / ATCC 700699), this protein is Pyruvate carboxylase (pycA).